The sequence spans 197 residues: Recombination protein RecR (197 aa).

The C4-type zinc-finger motif lies at 56–71 (CSRCFNLSAEDPCDIC). In terms of domain architecture, Toprim spans 79 to 174 (ETICVVAEPR…RVTRIAFGLP (96 aa)).

This sequence belongs to the RecR family.

Its function is as follows. May play a role in DNA repair. It seems to be involved in an RecBC-independent recombinational process of DNA repair. It may act with RecF and RecO. This chain is Recombination protein RecR, found in Gloeobacter violaceus (strain ATCC 29082 / PCC 7421).